The primary structure comprises 357 residues: Dynein axonemal assembly factor 10 (357 aa).

WD repeat units follow at residues 63–105 (EKAK…MPVY), 115–154 (NAID…DPVA), 162–205 (ENKR…LRWE), 207–249 (NIKN…PTKG), 257–297 (AHKS…QRSK), and 319–357 (LSTQ…LNKI).

Component of the PAQosome complex which is responsible for the biogenesis of several protein complexes and which consists of R2TP complex members RUVBL1, RUVBL2, RPAP3 and PIH1D1, URI complex members PFDN2, PFDN6, PDRG1, UXT and URI1 as well as ASDURF, POLR2E and DNAAF10/WDR92. Interacts with PIH1D1; the interaction associates DNAAF10 with the R2TP complex. Interacts with several dynein axonemal assembly factors. Widely expressed with the highest expression in testis.

The protein resides in the dynein axonemal particle. Key assembly factor specifically required for the stability of axonemal dynein heavy chains in cytoplasm. In Homo sapiens (Human), this protein is Dynein axonemal assembly factor 10.